Reading from the N-terminus, the 160-residue chain is 6,7-dimethyl-8-ribityllumazine synthase (160 aa).

5-amino-6-(D-ribitylamino)uracil-binding positions include Trp27, Ala59–Glu61, and Val81–Ile83. (2S)-2-hydroxy-3-oxobutyl phosphate is bound at residue Gln86–Thr87. Residue His89 is the Proton donor of the active site. Residue Asn114 coordinates 5-amino-6-(D-ribitylamino)uracil. Position 128 (Arg128) interacts with (2S)-2-hydroxy-3-oxobutyl phosphate.

This sequence belongs to the DMRL synthase family. Homopentamer.

The catalysed reaction is (2S)-2-hydroxy-3-oxobutyl phosphate + 5-amino-6-(D-ribitylamino)uracil = 6,7-dimethyl-8-(1-D-ribityl)lumazine + phosphate + 2 H2O + H(+). Its pathway is cofactor biosynthesis; riboflavin biosynthesis; riboflavin from 2-hydroxy-3-oxobutyl phosphate and 5-amino-6-(D-ribitylamino)uracil: step 1/2. In terms of biological role, catalyzes the formation of 6,7-dimethyl-8-ribityllumazine by condensation of 5-amino-6-(D-ribitylamino)uracil with 3,4-dihydroxy-2-butanone 4-phosphate. This is the penultimate step in the biosynthesis of riboflavin. The protein is 6,7-dimethyl-8-ribityllumazine synthase of Mycobacterium sp. (strain JLS).